The chain runs to 235 residues: NifU-like protein 2, chloroplastic (235 aa).

Residues 1–16 (MQLLTLNPAAISRTPP) constitute a chloroplast transit peptide.

Belongs to the NifU family. As to quaternary structure, homodimer; disulfide-linked. It depends on [2Fe-2S] cluster as a cofactor. Predominantly expressed in leaves and floral stalks. Ubiquitous (at protein level).

It localises to the plastid. The protein resides in the chloroplast stroma. Molecular scaffold for [Fe-S] cluster assembly of chloroplastic iron-sulfur proteins. Required for biogenesis of ferredoxin, a major photosynthetic electron carrier containing [2Fe-2S] cluster. Required for the assembly of photosystem I complex. The polypeptide is NifU-like protein 2, chloroplastic (NIFU2) (Arabidopsis thaliana (Mouse-ear cress)).